A 254-amino-acid chain; its full sequence is Casein kinase II subunit beta-2 (254 aa).

The protein belongs to the casein kinase 2 subunit beta family. Tetramer composed of two alpha chains, one beta chain and one beta' chain. Post-translationally, phosphorylated by alpha subunit.

Regulatory subunit of casein kinase II/CK2. As part of the kinase complex regulates the basal catalytic activity of the alpha subunit a constitutively active serine/threonine-protein kinase that phosphorylates a large number of substrates containing acidic residues C-terminal to the phosphorylated serine or threonine. This chain is Casein kinase II subunit beta-2, found in Schizosaccharomyces pombe (strain 972 / ATCC 24843) (Fission yeast).